Here is a 207-residue protein sequence, read N- to C-terminus: Outer-membrane lipoprotein LolB (207 aa).

Positions 1–26 (MSKLKIDTKRRFSLLIALVLIISLSS) are cleaved as a signal peptide. The N-palmitoyl cysteine moiety is linked to residue cysteine 27. Cysteine 27 carries S-diacylglycerol cysteine lipidation.

This sequence belongs to the LolB family. As to quaternary structure, monomer.

The protein localises to the cell outer membrane. In terms of biological role, plays a critical role in the incorporation of lipoproteins in the outer membrane after they are released by the LolA protein. The polypeptide is Outer-membrane lipoprotein LolB (Francisella tularensis subsp. tularensis (strain WY96-3418)).